The primary structure comprises 205 residues: Small ribosomal subunit protein uS4 (205 aa).

The span at 1–16 (MSKRESSKYKIDRRMG) shows a compositional bias: basic and acidic residues. The disordered stretch occupies residues 1-46 (MSKRESSKYKIDRRMGENIWGRPKSPVNRREYGPGQHGQRRKGKLS). The S4 RNA-binding domain maps to 94-157 (SRLDAIVYRA…KQLVIVLEAV (64 aa)).

It belongs to the universal ribosomal protein uS4 family. Part of the 30S ribosomal subunit. Contacts protein S5. The interaction surface between S4 and S5 is involved in control of translational fidelity.

In terms of biological role, one of the primary rRNA binding proteins, it binds directly to 16S rRNA where it nucleates assembly of the body of the 30S subunit. Its function is as follows. With S5 and S12 plays an important role in translational accuracy. The polypeptide is Small ribosomal subunit protein uS4 (Rhizobium johnstonii (strain DSM 114642 / LMG 32736 / 3841) (Rhizobium leguminosarum bv. viciae)).